Here is a 326-residue protein sequence, read N- to C-terminus: Homocysteine S-methyltransferase 1 (326 aa).

Residues 9 to 323 (LLEDLIEKCG…STIKAISRDL (315 aa)) form the Hcy-binding domain. Positions 241, 308, and 309 each coordinate Zn(2+).

Zn(2+) serves as cofactor. Expressed in roots, young leaves, florets and flowers. Not detected in old leaves.

The enzyme catalyses S-methyl-L-methionine + L-homocysteine = 2 L-methionine + H(+). Inhibited by L-methionine. Its function is as follows. Catalyzes methyl transfer from S-methylmethionine to homocysteine. The highest preference is for DL-homocysteine &gt;&gt; DL-cysteine. Has no selenocysteine methyltransferase activity. This is Homocysteine S-methyltransferase 1 (HMT1) from Brassica oleracea var. italica (Broccoli).